Reading from the N-terminus, the 592-residue chain is Beta-fructofuranosidase, insoluble isoenzyme 2 (592 aa).

The first 40 residues, 1–40 (MLIRCFHIKMALVTCFHSMLFLSAVVFIFSLDVNIRGVEA), serve as a signal peptide directing secretion. D75 is an active-site residue. N-linked (GlcNAc...) asparagine glycosylation is found at N171, N195, N310, N347, and N568.

Belongs to the glycosyl hydrolase 32 family.

It localises to the secreted. It is found in the cell wall. It carries out the reaction Hydrolysis of terminal non-reducing beta-D-fructofuranoside residues in beta-D-fructofuranosides.. Functionally, may play an important role in phloem unloading and in stress response. The sequence is that of Beta-fructofuranosidase, insoluble isoenzyme 2 (INV2) from Daucus carota (Wild carrot).